The following is a 211-amino-acid chain: Endo-1,4-beta-xylanase 6 (211 aa).

The signal sequence occupies residues 1–16 (MKVTAAFAGLLVTALA). In terms of domain architecture, GH11 spans 19-210 (APEPVLVSRS…GAGSASVTIS (192 aa)). The active-site Nucleophile is the glutamate 106. Glutamate 197 acts as the Proton donor in catalysis.

It belongs to the glycosyl hydrolase 11 (cellulase G) family.

The protein localises to the secreted. The catalysed reaction is Endohydrolysis of (1-&gt;4)-beta-D-xylosidic linkages in xylans.. Its pathway is glycan degradation; xylan degradation. Its function is as follows. Endo-1,4-beta-xylanase involved in the hydrolysis of xylan, a major structural heterogeneous polysaccharide found in plant biomass representing the second most abundant polysaccharide in the biosphere, after cellulose. The chain is Endo-1,4-beta-xylanase 6 (XYN6) from Aspergillus niger.